Consider the following 126-residue polypeptide: Anti-adapter protein IraD (126 aa).

It belongs to the GpW/Gp25 family. IraD subfamily. In terms of assembly, interacts with RssB.

It localises to the cytoplasm. Functionally, inhibits RpoS proteolysis by regulating RssB activity, thereby increasing the stability of the sigma stress factor RpoS during oxidative stress. Its effect on RpoS stability is due to its interaction with RssB, which probably blocks the interaction of RssB with RpoS, and the consequent delivery of the RssB-RpoS complex to the ClpXP protein degradation pathway. This chain is Anti-adapter protein IraD, found in Salmonella enteritidis PT4 (strain P125109).